The chain runs to 356 residues: 3'-5' exonuclease (356 aa).

Positions 1–120 (MDKYLIKMPT…TPSPEKEKPE (120 aa)) are disordered. Basic and acidic residues-rich tracts occupy residues 29-56 (TIDK…ENTP) and 71-85 (KNQD…IKNE). Over residues 99-113 (LTRSTRSMAEEGTPS) the composition is skewed to low complexity. 2 positions are modified to phosphoserine: serine 105 and serine 113. Residues 155 to 316 (TTLDVVPMAF…GQVIYRDLEQ (162 aa)) enclose the 3'-5' exonuclease domain. Mg(2+) is bound by residues aspartate 165, glutamate 167, and aspartate 303.

The protein belongs to the WRNexo family.

Its subcellular location is the nucleus. Functionally, has exonuclease activity on both single-stranded and duplex templates bearing overhangs, but not blunt ended duplex DNA, and cleaves in a 3'-5' direction. Essential for the formation of DNA replication focal centers. Has an important role in maintaining genome stability. This Drosophila willistoni (Fruit fly) protein is 3'-5' exonuclease.